A 227-amino-acid chain; its full sequence is Esterase OVCA2 (227 aa).

Positions 44-68 are disordered; the sequence is GPHPVPDPPGPEGARSDFGSCPPEE. Active-site charge relay system residues include S119, D179, and H206.

Belongs to the LovG family. Proteolytically degraded in response to RA and 4HPR treatment in a time- and dose-dependent manner in the promyelocytic leukemia cell line HL-60. In terms of tissue distribution, ubiquitously expressed.

It catalyses the reaction a carboxylic ester + H2O = an alcohol + a carboxylate + H(+). Its function is as follows. Exhibits ester hydrolase activity with a strong preference for long-chain alkyl ester substrates and high selectivity against a variety of short, branched, and substituted esters. Is able to hydrolyze ester bonds within a wide range of p-nitrophenyl derivatives (C2-C14) in vitro, with a strong preference toward substrates of &gt;8 carbons. The chain is Esterase OVCA2 from Homo sapiens (Human).